The primary structure comprises 567 residues: Cytochrome P450 monooxygenase 79 (567 aa).

The chain crosses the membrane as a helical span at residues Glu-7–Thr-24. Asn-223 and Asn-279 each carry an N-linked (GlcNAc...) asparagine glycan. A heme-binding site is contributed by Cys-475.

The protein belongs to the cytochrome P450 family. The cofactor is heme.

It localises to the membrane. It functions in the pathway secondary metabolite biosynthesis. Cytochrome P450 monooxygenase that is able to use dehydroabietic acid as a substrate for oxidation. The chain is Cytochrome P450 monooxygenase 79 from Postia placenta (strain ATCC 44394 / Madison 698-R) (Brown rot fungus).